The chain runs to 1120 residues: Probable leucine-rich repeat receptor-like protein kinase At1g35710 (1120 aa).

Residues 1-29 form the signal peptide; sequence MGFAEKNLYDFRFLLFISIILSCSISASA. Over 30 to 783 the chain is Extracellular; sequence TIAEANALLK…RELKKPKKNG (754 aa). 4 N-linked (GlcNAc...) asparagine glycosylation sites follow: Asn46, Asn60, Asn83, and Asn124. LRR repeat units lie at residues 78–100, 103–125, 127–150, 151–172, 175–198, 199–221, 223–246, 247–269, 271–294, 295–317, 319–342, 343–365, 367–389, 391–412, 415–437, 439–461, 463–484, 487–510, 535–557, 559–581, 583–605, 607–630, 631–652, 655–677, 678–701, 702–723, and 726–748; these read SIEE…PFIS, NLAY…FGNL, KLIY…GNLK, NLTV…ELGN, SMTD…GNLK, NLMV…LGNM, NLMV…IGNM, SMTN…GNLK, NLTL…LGNI, SMID…GNLK, NLTI…LGNM, SMID…FGNL, NLTY…ELGN, SMIN…FGNF, KLES…VANS, HLTT…TVCK, KLQN…RDCK, DLNF…WEKS, KLGA…IWNM, QLVE…IGNL, NLSR…SFLT, NLES…TFDS, KLHD…SKLT, QLTQ…SSLQ, SLDK…TFEG, and ALTN…PTFR. Asn151 carries an N-linked (GlcNAc...) asparagine glycan. A glycan (N-linked (GlcNAc...) asparagine) is linked at Asn295. N-linked (GlcNAc...) asparagine glycosylation occurs at Asn343. N-linked (GlcNAc...) asparagine glycans are attached at residues Asn391, Asn436, Asn460, Asn473, and Asn490. 6 N-linked (GlcNAc...) asparagine glycosylation sites follow: Asn569, Asn580, Asn604, Asn607, Asn641, and Asn660. N-linked (GlcNAc...) asparagine glycosylation occurs at Asn712. The helical transmembrane segment at 784–804 threads the bilayer; it reads NLVVWILVPILGVLVILSICA. The Cytoplasmic portion of the chain corresponds to 805-1120; that stretch reads NTFTYCIRKR…TMLSISTTFS (316 aa). Thr848 carries the phosphothreonine modification. In terms of domain architecture, Protein kinase spans 851-1120; that stretch reads FDPTHLIGTG…TMLSISTTFS (270 aa). ATP is bound by residues 857–865 and Lys878; that span reads IGTGGYSKV. Residues Tyr929 and Tyr968 each carry the phosphotyrosine modification. Asp981 serves as the catalytic Proton acceptor. Ser1014 is modified (phosphoserine). Tyr1022 and Tyr1029 each carry phosphotyrosine. Thr1030 carries the post-translational modification Phosphothreonine.

Belongs to the protein kinase superfamily. Ser/Thr protein kinase family.

The protein resides in the membrane. The catalysed reaction is L-seryl-[protein] + ATP = O-phospho-L-seryl-[protein] + ADP + H(+). It catalyses the reaction L-threonyl-[protein] + ATP = O-phospho-L-threonyl-[protein] + ADP + H(+). This chain is Probable leucine-rich repeat receptor-like protein kinase At1g35710, found in Arabidopsis thaliana (Mouse-ear cress).